Consider the following 267-residue polypeptide: Methylglyoxal reductase DkgB (267 aa).

The active-site Proton donor is Tyr39. His97 is a binding site for substrate. 179-231 (MTLAYGKALAEPVIKTIAEQHGATPAQVILSWAMQLGYGVIPSSTKAANLASN) is an NADP(+) binding site.

It belongs to the aldo/keto reductase family. In terms of assembly, monomer.

It localises to the cytoplasm. The catalysed reaction is hydroxyacetone + NADP(+) = methylglyoxal + NADPH + H(+). Aldo-keto reductase that significantly contributes to cellular methylglyoxal detoxification by catalyzing the NADPH-dependent conversion of methylglyoxal to acetol. This is Methylglyoxal reductase DkgB from Yersinia pestis.